A 534-amino-acid polypeptide reads, in one-letter code: CTP synthase (534 aa).

Positions 1-267 (MTKYIFVTGG…GDLIIERLAL (267 aa)) are amidoligase domain. Ser-13 is a CTP binding site. A UTP-binding site is contributed by Ser-13. 14–19 (SVGKGI) lines the ATP pocket. An L-glutamine-binding site is contributed by Tyr-54. Asp-71 contacts ATP. Asp-71 and Glu-141 together coordinate Mg(2+). CTP-binding positions include 148–150 (DIE), 188–193 (KTKPTQ), and Lys-224. Residues 188–193 (KTKPTQ) and Lys-224 contribute to the UTP site. The Glutamine amidotransferase type-1 domain maps to 292–534 (TVAIVGKYVE…VQAALEQIAE (243 aa)). An L-glutamine-binding site is contributed by Gly-354. The active-site Nucleophile; for glutamine hydrolysis is Cys-381. L-glutamine is bound by residues 382 to 385 (LGMQ), Glu-405, and Arg-462. Active-site residues include His-507 and Glu-509.

Belongs to the CTP synthase family. As to quaternary structure, homotetramer.

The catalysed reaction is UTP + L-glutamine + ATP + H2O = CTP + L-glutamate + ADP + phosphate + 2 H(+). The enzyme catalyses L-glutamine + H2O = L-glutamate + NH4(+). It catalyses the reaction UTP + NH4(+) + ATP = CTP + ADP + phosphate + 2 H(+). Its pathway is pyrimidine metabolism; CTP biosynthesis via de novo pathway; CTP from UDP: step 2/2. Allosterically activated by GTP, when glutamine is the substrate; GTP has no effect on the reaction when ammonia is the substrate. The allosteric effector GTP functions by stabilizing the protein conformation that binds the tetrahedral intermediate(s) formed during glutamine hydrolysis. Inhibited by the product CTP, via allosteric rather than competitive inhibition. Catalyzes the ATP-dependent amination of UTP to CTP with either L-glutamine or ammonia as the source of nitrogen. Regulates intracellular CTP levels through interactions with the four ribonucleotide triphosphates. The sequence is that of CTP synthase from Herpetosiphon aurantiacus (strain ATCC 23779 / DSM 785 / 114-95).